The primary structure comprises 156 residues: Small ribosomal subunit protein uS7 (156 aa).

This sequence belongs to the universal ribosomal protein uS7 family. In terms of assembly, part of the 30S ribosomal subunit. Contacts proteins S9 and S11.

One of the primary rRNA binding proteins, it binds directly to 16S rRNA where it nucleates assembly of the head domain of the 30S subunit. Is located at the subunit interface close to the decoding center, probably blocks exit of the E-site tRNA. The sequence is that of Small ribosomal subunit protein uS7 from Parasynechococcus marenigrum (strain WH8102).